A 205-amino-acid chain; its full sequence is Small ribosomal subunit protein uS4 (205 aa).

The span at 1–12 (MSKRIQAKHKLD) shows a compositional bias: basic residues. Positions 1 to 49 (MSKRIQAKHKLDRRMGQNIWGRPKSPVNRREYGPGQHGQRRKGKMSDFG) are disordered. An S4 RNA-binding domain is found at 94 to 155 (RRLDAVVYRA…SSRQLEIVIV (62 aa)).

This sequence belongs to the universal ribosomal protein uS4 family. In terms of assembly, part of the 30S ribosomal subunit. Contacts protein S5. The interaction surface between S4 and S5 is involved in control of translational fidelity.

Its function is as follows. One of the primary rRNA binding proteins, it binds directly to 16S rRNA where it nucleates assembly of the body of the 30S subunit. In terms of biological role, with S5 and S12 plays an important role in translational accuracy. The polypeptide is Small ribosomal subunit protein uS4 (Methylobacterium radiotolerans (strain ATCC 27329 / DSM 1819 / JCM 2831 / NBRC 15690 / NCIMB 10815 / 0-1)).